The sequence spans 211 residues: Large ribosomal subunit protein bL25 (211 aa).

The span at 1 to 18 shows a compositional bias: basic and acidic residues; the sequence is MAKTHEIKAERRADEGKG. The disordered stretch occupies residues 1–20; the sequence is MAKTHEIKAERRADEGKGAS.

It belongs to the bacterial ribosomal protein bL25 family. CTC subfamily. Part of the 50S ribosomal subunit; part of the 5S rRNA/L5/L18/L25 subcomplex. Contacts the 5S rRNA. Binds to the 5S rRNA independently of L5 and L18.

This is one of the proteins that binds to the 5S RNA in the ribosome where it forms part of the central protuberance. In Xanthomonas oryzae pv. oryzae (strain MAFF 311018), this protein is Large ribosomal subunit protein bL25.